The primary structure comprises 468 residues: Effector protein hopD2 (468 aa).

Residues 1–20 are compositionally biased toward polar residues; the sequence is MNPLQPIQHSITNSQMSGGQ. Residues 1-35 form a disordered region; it reads MNPLQPIQHSITNSQMSGGQQLEAEGSQAHNSYSH. Residues 143–468 form the Tyrosine-protein phosphatase domain; the sequence is DASSPPSAND…TQWRAKIALE (326 aa). Cysteine 378 acts as the Phosphocysteine intermediate in catalysis.

As to quaternary structure, interacts with EFR and FLS2 (via the kinase and cytoplasmic domains).

Its subcellular location is the secreted. The enzyme catalyses O-phospho-L-tyrosyl-[protein] + H2O = L-tyrosyl-[protein] + phosphate. With respect to regulation, inhibited by sodium orthovanadate. Functionally, effector showing tyrosine-phosphatase activity required for host defense suppression. Functions inside plant cells causing suppression of HR (hypersensitive response), PR1 gene expression and oxidative burst probably by interfering with a MAPK (mitogen-activated protein kinase) pathway. MAPK cascades are known to activate defense-related transcription factors. Inhibits plant pattern-recognition receptors (PRRs) activation. In Pseudomonas syringae pv. tomato (strain ATCC BAA-871 / DC3000), this protein is Effector protein hopD2 (hopD2).